The chain runs to 275 residues: Large ribosomal subunit protein uL2c (275 aa).

A disordered region spans residues 224–275 (AMNPVDHPHGGGEGRTPIGRKKPVTPWGYSALGKKSRKRNRYSDASILRRRE).

Belongs to the universal ribosomal protein uL2 family. As to quaternary structure, part of the 50S ribosomal subunit.

The protein localises to the plastid. It localises to the chloroplast. The chain is Large ribosomal subunit protein uL2c (rpl2) from Picea abies (Norway spruce).